The following is a 271-amino-acid chain: MGQKVNPHGLRVGVIKDWDSRWFATDKKEFGNLLLEDHNIRKFLKKRLYSAGVAKIEIERSANKIKMDLHVAKPGVVIGRAGAGIEALKAELEKMTKKTIIVNIVEVRSTDKNAQLVAENIALAIERRVAFRRAMKQAIQRAMKSGAKGIKVSASGRLGGAEMARTEGYSEGNVPLQTLRADIDYGFAEADTTYGKIGIKVWICNGEVLPTRDGVNPREESRKSDRRDNKRDNRRNDRRGNDRRGNDNRGNYRGQRPQGGSRPQRTENKGN.

The region spanning 40 to 108 (IRKFLKKRLY…TIIVNIVEVR (69 aa)) is the KH type-2 domain. The segment at 210-271 (PTRDGVNPRE…RPQRTENKGN (62 aa)) is disordered. Residues 215–247 (VNPREESRKSDRRDNKRDNRRNDRRGNDRRGND) show a composition bias toward basic and acidic residues.

This sequence belongs to the universal ribosomal protein uS3 family. As to quaternary structure, part of the 30S ribosomal subunit. Forms a tight complex with proteins S10 and S14.

Binds the lower part of the 30S subunit head. Binds mRNA in the 70S ribosome, positioning it for translation. This Clostridioides difficile (strain 630) (Peptoclostridium difficile) protein is Small ribosomal subunit protein uS3.